The primary structure comprises 312 residues: Coproporphyrin III ferrochelatase (312 aa).

Residues Tyr13, Arg30, 46-47 (RY), Ser54, and Tyr125 each bind Fe-coproporphyrin III. Fe(2+)-binding residues include His183 and Glu264.

Belongs to the ferrochelatase family.

It localises to the cytoplasm. It carries out the reaction Fe-coproporphyrin III + 2 H(+) = coproporphyrin III + Fe(2+). It functions in the pathway porphyrin-containing compound metabolism; protoheme biosynthesis. Its function is as follows. Involved in coproporphyrin-dependent heme b biosynthesis. Catalyzes the insertion of ferrous iron into coproporphyrin III to form Fe-coproporphyrin III. This Bacillus pumilus (strain SAFR-032) protein is Coproporphyrin III ferrochelatase.